The sequence spans 566 residues: Mannitol 2-dehydrogenase (566 aa).

106 to 117 (IVHVGVGGFHRA) contributes to the NAD(+) binding site.

It belongs to the mannitol dehydrogenase family. Monomer.

It carries out the reaction D-mannitol + NAD(+) = D-fructose + NADH + H(+). Its function is as follows. Catalyzes the NAD(H)-dependent interconversion of D-fructose and D-mannitol in the mannitol metabolic pathway. The polypeptide is Mannitol 2-dehydrogenase (Pyrenophora tritici-repentis (strain Pt-1C-BFP) (Wheat tan spot fungus)).